Consider the following 315-residue polypeptide: MNLAYIPSPTFSKFEIGPFTIHMYAICILIGICVAVWILATRWKRYGGTFDQILDTTLVTVPCALVGARLYHCITTPADYFPPTGNLVNILKVWEGGMAIFGGISVGTLVAFLWCRHKHYPFAIFADAIAPALPVAQAIGRLGNWFNQELYGWPTTLPWGLKLNDADAIGKSEICYSGAQCPDYRTTLFHPTFLYEMIWNLIGAALIIYLGHKLADRLKAGQQFAMYLMWYGLGRTWIENVRINYSTVILGLRTNVWTAIIVFVLGCILFVVLYQYGPDPKAQARGLAAVTADELERQSIEEEQLRQKKQTNRTK.

The next 2 membrane-spanning stretches (helical) occupy residues 19 to 39 and 93 to 113; these read FTIH…VWIL and VWEG…VAFL. An a 1,2-diacyl-sn-glycero-3-phospho-(1'-sn-glycerol)-binding site is contributed by R141. Transmembrane regions (helical) follow at residues 188 to 208 and 256 to 276; these read LFHP…ALII and VWTA…LYQY.

This sequence belongs to the Lgt family.

It localises to the cell membrane. The catalysed reaction is L-cysteinyl-[prolipoprotein] + a 1,2-diacyl-sn-glycero-3-phospho-(1'-sn-glycerol) = an S-1,2-diacyl-sn-glyceryl-L-cysteinyl-[prolipoprotein] + sn-glycerol 1-phosphate + H(+). It participates in protein modification; lipoprotein biosynthesis (diacylglyceryl transfer). Catalyzes the transfer of the diacylglyceryl group from phosphatidylglycerol to the sulfhydryl group of the N-terminal cysteine of a prolipoprotein, the first step in the formation of mature lipoproteins. This Bifidobacterium longum (strain NCC 2705) protein is Phosphatidylglycerol--prolipoprotein diacylglyceryl transferase.